Consider the following 490-residue polypeptide: Phosphoethanolamine N-methyltransferase 3 (490 aa).

Positions 60, 65, 81, 106, 107, and 125 each coordinate S-adenosyl-L-homocysteine. Serine 158, serine 163, glycine 164, arginine 168, and tyrosine 175 together coordinate phosphocholine. Residues 244 to 245 and tyrosine 253 each bind N-methylethanolamine phosphate; that span reads QY. Residue tyrosine 253 coordinates phosphocholine. Positions 262, 263, 289, 311, 337, 338, and 354 each coordinate S-adenosyl-L-homocysteine. Phosphocholine contacts are provided by tyrosine 385, tyrosine 399, arginine 403, tyrosine 405, and lysine 471. N-methylethanolamine phosphate contacts are provided by residues tyrosine 385, tyrosine 399, 403–405, and lysine 471; that span reads RGY.

This sequence belongs to the class I-like SAM-binding methyltransferase superfamily. PEAMT family. Expressed in root vasculature, shoots, rosettes leaves, cauline leaves, sepals, petals, anther filaments and ovules. Highly expressed in leaf vasculature.

Its subcellular location is the cytoplasm. The catalysed reaction is phosphoethanolamine + S-adenosyl-L-methionine = N-methylethanolamine phosphate + S-adenosyl-L-homocysteine + H(+). The enzyme catalyses N-methylethanolamine phosphate + S-adenosyl-L-methionine = N,N-dimethylethanolamine phosphate + S-adenosyl-L-homocysteine + H(+). It carries out the reaction N,N-dimethylethanolamine phosphate + S-adenosyl-L-methionine = phosphocholine + S-adenosyl-L-homocysteine + H(+). It functions in the pathway phospholipid metabolism; phosphatidylcholine biosynthesis; phosphocholine from phosphoethanolamine: step 1/1. In terms of biological role, involved in phosphocholine biosynthesis. Catalyzes the N-methylation of phosphoethanolamine, phosphomonomethylethanolamine and phosphodimethylethanolamine, the three methylation steps required to convert phosphoethanolamine to phosphocholine (PC). In association with NMT1, regulates PC homeostasis, phase transition at the shoot apex, coordinated organ development, and fertility. In associtation with NMT1, involved in phosphatidylcholine biosynthesis and vascular development. The chain is Phosphoethanolamine N-methyltransferase 3 from Arabidopsis thaliana (Mouse-ear cress).